The primary structure comprises 255 residues: Ribosomal RNA large subunit methyltransferase E (255 aa).

S-adenosyl-L-methionine is bound by residues G50, W52, D68, D84, and D108. K148 (proton acceptor) is an active-site residue. The TRAM domain occupies 195-253; it reads PVRSGEIYDVTVDSVGRTGDGIAMIQGFAVIVKNASPGERLRIKIGPVKQRFAFASILE.

This sequence belongs to the class I-like SAM-binding methyltransferase superfamily. RNA methyltransferase RlmE family.

It is found in the cytoplasm. It carries out the reaction uridine(2552) in 23S rRNA + S-adenosyl-L-methionine = 2'-O-methyluridine(2552) in 23S rRNA + S-adenosyl-L-homocysteine + H(+). Its function is as follows. Specifically methylates the uridine in position 2552 of 23S rRNA at the 2'-O position of the ribose in the fully assembled 50S ribosomal subunit. This chain is Ribosomal RNA large subunit methyltransferase E, found in Methanothrix thermoacetophila (strain DSM 6194 / JCM 14653 / NBRC 101360 / PT) (Methanosaeta thermophila).